A 59-amino-acid polypeptide reads, in one-letter code: Large ribosomal subunit protein bL32 (59 aa).

The span at 1 to 16 (MAVPKRKTSPSKRGMR) shows a compositional bias: basic residues. A disordered region spans residues 1–59 (MAVPKRKTSPSKRGMRRSADALKAPTYIEDKNSGELRRPHHIDLKTGMYRGRSVLPPKD). Residues 28–44 (IEDKNSGELRRPHHIDL) show a composition bias toward basic and acidic residues.

The protein belongs to the bacterial ribosomal protein bL32 family.

The sequence is that of Large ribosomal subunit protein bL32 from Bartonella quintana (strain Toulouse) (Rochalimaea quintana).